The following is a 673-amino-acid chain: DNA ligase (673 aa).

NAD(+) contacts are provided by residues 36–40, 85–86, and glutamate 116; these read DAEYD and SL. Lysine 118 (N6-AMP-lysine intermediate) is an active-site residue. NAD(+)-binding residues include arginine 139, glutamate 176, lysine 291, and lysine 315. Residues cysteine 409, cysteine 412, cysteine 427, and cysteine 433 each contribute to the Zn(2+) site. The BRCT domain occupies 592-673; the sequence is RGEQPLAGRT…LQALLQEHGR (82 aa).

This sequence belongs to the NAD-dependent DNA ligase family. LigA subfamily. Mg(2+) serves as cofactor. Requires Mn(2+) as cofactor.

The catalysed reaction is NAD(+) + (deoxyribonucleotide)n-3'-hydroxyl + 5'-phospho-(deoxyribonucleotide)m = (deoxyribonucleotide)n+m + AMP + beta-nicotinamide D-nucleotide.. Its function is as follows. DNA ligase that catalyzes the formation of phosphodiester linkages between 5'-phosphoryl and 3'-hydroxyl groups in double-stranded DNA using NAD as a coenzyme and as the energy source for the reaction. It is essential for DNA replication and repair of damaged DNA. This is DNA ligase from Alkalilimnicola ehrlichii (strain ATCC BAA-1101 / DSM 17681 / MLHE-1).